Here is a 450-residue protein sequence, read N- to C-terminus: Membrane-bound lytic murein transglycosylase F 2 (450 aa).

A signal peptide spans 1–20; sequence MRTWIAILAVVLVLLLNACT. The non-LT domain stretch occupies residues 21–261; sequence DGPEDGPRLE…AMENRYYTYV (241 aa). Residues 262–450 form an LT domain region; sequence GEFDFVDLRA…YRDVIRQAFE (189 aa). Residue E308 is part of the active site.

This sequence in the N-terminal section; belongs to the bacterial solute-binding protein 3 family. The protein in the C-terminal section; belongs to the transglycosylase Slt family.

It localises to the cell outer membrane. It carries out the reaction Exolytic cleavage of the (1-&gt;4)-beta-glycosidic linkage between N-acetylmuramic acid (MurNAc) and N-acetylglucosamine (GlcNAc) residues in peptidoglycan, from either the reducing or the non-reducing ends of the peptidoglycan chains, with concomitant formation of a 1,6-anhydrobond in the MurNAc residue.. Its function is as follows. Murein-degrading enzyme that degrades murein glycan strands and insoluble, high-molecular weight murein sacculi, with the concomitant formation of a 1,6-anhydromuramoyl product. Lytic transglycosylases (LTs) play an integral role in the metabolism of the peptidoglycan (PG) sacculus. Their lytic action creates space within the PG sacculus to allow for its expansion as well as for the insertion of various structures such as secretion systems and flagella. The chain is Membrane-bound lytic murein transglycosylase F 2 from Alkalilimnicola ehrlichii (strain ATCC BAA-1101 / DSM 17681 / MLHE-1).